The following is a 299-amino-acid chain: Nucleotide-binding protein DIP1313 (299 aa).

ATP is bound at residue 22–29 (GLSGAGLS). Residue 73-76 (DVRS) coordinates GTP.

The protein belongs to the RapZ-like family.

Functionally, displays ATPase and GTPase activities. The chain is Nucleotide-binding protein DIP1313 from Corynebacterium diphtheriae (strain ATCC 700971 / NCTC 13129 / Biotype gravis).